The sequence spans 83 residues: Retinal cone rhodopsin-sensitive cGMP 3',5'-cyclic phosphodiesterase subunit gamma (83 aa).

The segment covering methionine 1–threonine 17 has biased composition (polar residues). Residues methionine 1 to proline 51 are disordered. Residues glycine 22–valine 43 are compositionally biased toward basic residues.

This sequence belongs to the rod/cone cGMP-PDE gamma subunit family. As to quaternary structure, tetramer composed of two catalytic chains (alpha and beta), and two inhibitory chains (gamma).

The catalysed reaction is 3',5'-cyclic GMP + H2O = GMP + H(+). Its function is as follows. Participates in processes of transmission and amplification of the visual signal. cGMP-PDEs are the effector molecules in G-protein-mediated phototransduction in vertebrate rods and cones. This is Retinal cone rhodopsin-sensitive cGMP 3',5'-cyclic phosphodiesterase subunit gamma (PDE6H) from Bos taurus (Bovine).